Here is a 389-residue protein sequence, read N- to C-terminus: 26S proteasome regulatory subunit 10B (389 aa).

Residue Lys72 is modified to N6-acetyllysine. 174–181 is an ATP binding site; it reads GPPGTGKT. Lys206 carries the N6-acetyllysine modification. Ser244 is modified (phosphoserine).

This sequence belongs to the AAA ATPase family. Component of the 19S proteasome regulatory particle complex. The 26S proteasome consists of a 20S core particle (CP) and two 19S regulatory subunits (RP). The regulatory particle is made of a lid composed of 9 subunits, a base containing 6 ATPases including PSMC6 and few additional components. Interacts with PAAF1.

The protein localises to the cytoplasm. It localises to the nucleus. Component of the 26S proteasome, a multiprotein complex involved in the ATP-dependent degradation of ubiquitinated proteins. This complex plays a key role in the maintenance of protein homeostasis by removing misfolded or damaged proteins, which could impair cellular functions, and by removing proteins whose functions are no longer required. Therefore, the proteasome participates in numerous cellular processes, including cell cycle progression, apoptosis, or DNA damage repair. PSMC6 belongs to the heterohexameric ring of AAA (ATPases associated with diverse cellular activities) proteins that unfolds ubiquitinated target proteins that are concurrently translocated into a proteolytic chamber and degraded into peptides. The polypeptide is 26S proteasome regulatory subunit 10B (PSMC6) (Bos taurus (Bovine)).